Here is a 357-residue protein sequence, read N- to C-terminus: Alanine racemase (357 aa).

The active-site Proton acceptor; specific for D-alanine is the Lys-34. N6-(pyridoxal phosphate)lysine is present on Lys-34. Residue Arg-130 participates in substrate binding. Residue Tyr-253 is the Proton acceptor; specific for L-alanine of the active site. A substrate-binding site is contributed by Met-301.

Belongs to the alanine racemase family. Pyridoxal 5'-phosphate serves as cofactor.

The catalysed reaction is L-alanine = D-alanine. It participates in amino-acid biosynthesis; D-alanine biosynthesis; D-alanine from L-alanine: step 1/1. Its function is as follows. Catalyzes the interconversion of L-alanine and D-alanine. May also act on other amino acids. The sequence is that of Alanine racemase (alr) from Mannheimia succiniciproducens (strain KCTC 0769BP / MBEL55E).